The following is a 299-amino-acid chain: Pyrroline-5-carboxylate reductase 2 (299 aa).

This sequence belongs to the pyrroline-5-carboxylate reductase family. As to quaternary structure, homodecamer; composed of 5 homodimers.

It catalyses the reaction L-proline + NADP(+) = (S)-1-pyrroline-5-carboxylate + NADPH + 2 H(+). The enzyme catalyses L-proline + NAD(+) = (S)-1-pyrroline-5-carboxylate + NADH + 2 H(+). It functions in the pathway amino-acid biosynthesis; L-proline biosynthesis; L-proline from L-glutamate 5-semialdehyde: step 1/1. The protein is Pyrroline-5-carboxylate reductase 2 (pycr2) of Dictyostelium discoideum (Social amoeba).